The chain runs to 185 residues: ATP-dependent protease subunit HslV (185 aa).

Residue threonine 12 is part of the active site. Positions 168, 171, and 174 each coordinate Na(+).

It belongs to the peptidase T1B family. HslV subfamily. As to quaternary structure, a double ring-shaped homohexamer of HslV is capped on each side by a ring-shaped HslU homohexamer. The assembly of the HslU/HslV complex is dependent on binding of ATP.

It is found in the cytoplasm. The catalysed reaction is ATP-dependent cleavage of peptide bonds with broad specificity.. Its activity is regulated as follows. Allosterically activated by HslU binding. Protease subunit of a proteasome-like degradation complex believed to be a general protein degrading machinery. The protein is ATP-dependent protease subunit HslV of Cereibacter sphaeroides (strain ATCC 17029 / ATH 2.4.9) (Rhodobacter sphaeroides).